The sequence spans 313 residues: Beta-ketoacyl-[acyl-carrier-protein] synthase III (313 aa).

Active-site residues include Cys-112 and His-238. The segment at 239 to 243 (QANIR) is ACP-binding. Residue Asn-268 is part of the active site.

Belongs to the thiolase-like superfamily. FabH family. Homodimer.

It localises to the cytoplasm. It carries out the reaction malonyl-[ACP] + acetyl-CoA + H(+) = 3-oxobutanoyl-[ACP] + CO2 + CoA. Its pathway is lipid metabolism; fatty acid biosynthesis. Its function is as follows. Catalyzes the condensation reaction of fatty acid synthesis by the addition to an acyl acceptor of two carbons from malonyl-ACP. Catalyzes the first condensation reaction which initiates fatty acid synthesis and may therefore play a role in governing the total rate of fatty acid production. Possesses both acetoacetyl-ACP synthase and acetyl transacylase activities. Its substrate specificity determines the biosynthesis of branched-chain and/or straight-chain of fatty acids. This chain is Beta-ketoacyl-[acyl-carrier-protein] synthase III, found in Staphylococcus aureus (strain bovine RF122 / ET3-1).